Reading from the N-terminus, the 701-residue chain is Pseudouridylate synthase PUS7L (701 aa).

Position 79 is a phosphoserine (S79). D339 serves as the catalytic Nucleophile. One can recognise a TRUD domain in the interval 424-647 (GFVNYYGPQR…PGCYRQILKH (224 aa)).

The protein belongs to the pseudouridine synthase TruD family.

It carries out the reaction a uridine in mRNA = a pseudouridine in mRNA. In terms of biological role, pseudouridine synthase that catalyzes pseudouridylation of mRNAs. The sequence is that of Pseudouridylate synthase PUS7L from Homo sapiens (Human).